The sequence spans 144 residues: Large ribosomal subunit protein uL15 (144 aa).

A disordered region spans residues Met1 to Gly52. A compositionally biased stretch (gly residues) spans Arg21–Gly31. Basic residues predominate over residues Gly32–Gly44.

It belongs to the universal ribosomal protein uL15 family. In terms of assembly, part of the 50S ribosomal subunit.

In terms of biological role, binds to the 23S rRNA. This is Large ribosomal subunit protein uL15 from Aliivibrio fischeri (strain ATCC 700601 / ES114) (Vibrio fischeri).